Here is a 221-residue protein sequence, read N- to C-terminus: Ribonuclease T (221 aa).

Residues 21 to 195 form the Exonuclease domain; that stretch reads VVVDVETAGF…YDAEKTADLF (175 aa). Mg(2+) is bound by residues Asp-24, Glu-26, His-182, and Asp-187. The active-site Proton donor/acceptor is His-182.

The protein belongs to the RNase T family. In terms of assembly, homodimer. Mg(2+) is required as a cofactor.

Trims short 3' overhangs of a variety of RNA species, leaving a one or two nucleotide 3' overhang. Responsible for the end-turnover of tRNA: specifically removes the terminal AMP residue from uncharged tRNA (tRNA-C-C-A). Also appears to be involved in tRNA biosynthesis. The chain is Ribonuclease T from Marinobacter nauticus (strain ATCC 700491 / DSM 11845 / VT8) (Marinobacter aquaeolei).